Reading from the N-terminus, the 310-residue chain is MKIFGITMGDPAGIGPELILKLQKDMEDENAYVIYGEEYILKHASSVLGQNFYYEKVNSVDDVKDKGIYLISLSLKGALEPSPSSGKLAIAYLARATADAISKKLNGILTMPINKYFAKASGFSFNGQTEYLAFADNKKDFAMMMYSDAIKVVLATIHIPLKDIANAINVELIKQKIKLIKDYIPKYFRFIPTIKVLGLNPHAGEGGLIGDEEAKIIIPAIRDEDVVGPIPPDTAFIDIKKDDIFLCMYHDQGLIPFKMLAFDKGSNVTIGLSFLRTSPDHGTAYDIAYKGLARVDSAGYSLELLKRYGY.

Residue T129 coordinates substrate. A divalent metal cation-binding residues include H158, H202, and H250. Substrate is bound by residues K258, N267, and R276.

Belongs to the PdxA family. As to quaternary structure, homodimer. Requires a divalent metal cation as cofactor.

Its subcellular location is the cytoplasm. The catalysed reaction is 4-(phosphooxy)-L-threonine + NAD(+) = 3-amino-2-oxopropyl phosphate + CO2 + NADH. It functions in the pathway cofactor biosynthesis; pyridoxine 5'-phosphate biosynthesis; pyridoxine 5'-phosphate from D-erythrose 4-phosphate: step 4/5. Its function is as follows. Catalyzes the NAD(P)-dependent oxidation of 4-(phosphooxy)-L-threonine (HTP) into 2-amino-3-oxo-4-(phosphooxy)butyric acid which spontaneously decarboxylates to form 3-amino-2-oxopropyl phosphate (AHAP). This is 4-hydroxythreonine-4-phosphate dehydrogenase from Hydrogenobaculum sp. (strain Y04AAS1).